Consider the following 475-residue polypeptide: Ribulose bisphosphate carboxylase large chain (475 aa).

A propeptide spanning residues 1–2 is cleaved from the precursor; sequence MA. Proline 3 is modified (N-acetylproline). Lysine 14 bears the N6,N6,N6-trimethyllysine mark. Residues asparagine 123 and threonine 173 each contribute to the substrate site. Lysine 175 acts as the Proton acceptor in catalysis. Residue lysine 177 participates in substrate binding. Lysine 201, aspartate 203, and glutamate 204 together coordinate Mg(2+). N6-carboxylysine is present on lysine 201. Histidine 294 functions as the Proton acceptor in the catalytic mechanism. Residues arginine 295, histidine 327, and serine 379 each coordinate substrate.

Belongs to the RuBisCO large chain family. Type I subfamily. In terms of assembly, heterohexadecamer of 8 large chains and 8 small chains; disulfide-linked. The disulfide link is formed within the large subunit homodimers. Requires Mg(2+) as cofactor. Post-translationally, the disulfide bond which can form in the large chain dimeric partners within the hexadecamer appears to be associated with oxidative stress and protein turnover.

It localises to the plastid. The protein localises to the chloroplast. The enzyme catalyses 2 (2R)-3-phosphoglycerate + 2 H(+) = D-ribulose 1,5-bisphosphate + CO2 + H2O. The catalysed reaction is D-ribulose 1,5-bisphosphate + O2 = 2-phosphoglycolate + (2R)-3-phosphoglycerate + 2 H(+). In terms of biological role, ruBisCO catalyzes two reactions: the carboxylation of D-ribulose 1,5-bisphosphate, the primary event in carbon dioxide fixation, as well as the oxidative fragmentation of the pentose substrate in the photorespiration process. Both reactions occur simultaneously and in competition at the same active site. In Oedogonium cardiacum (Filamentous green alga), this protein is Ribulose bisphosphate carboxylase large chain.